The primary structure comprises 65 residues: Large ribosomal subunit protein bL35 (65 aa).

Positions 1 to 28 (MPKMKTNRSAAKRFGKTGSGKFTRRRQN) are disordered.

This sequence belongs to the bacterial ribosomal protein bL35 family.

This Solidesulfovibrio magneticus (strain ATCC 700980 / DSM 13731 / RS-1) (Desulfovibrio magneticus) protein is Large ribosomal subunit protein bL35.